Here is a 122-residue protein sequence, read N- to C-terminus: Large ribosomal subunit protein uL14 (122 aa).

The protein belongs to the universal ribosomal protein uL14 family. As to quaternary structure, part of the 50S ribosomal subunit. Forms a cluster with proteins L3 and L19. In the 70S ribosome, L14 and L19 interact and together make contacts with the 16S rRNA in bridges B5 and B8.

In terms of biological role, binds to 23S rRNA. Forms part of two intersubunit bridges in the 70S ribosome. This is Large ribosomal subunit protein uL14 from Alcanivorax borkumensis (strain ATCC 700651 / DSM 11573 / NCIMB 13689 / SK2).